Reading from the N-terminus, the 206-residue chain is Large ribosomal subunit protein bL17 (206 aa).

Basic and acidic residues predominate over residues 130-141; that stretch reads ERARGTRFEARR. The interval 130–206 is disordered; the sequence is ERARGTRFEA…SGAGEQNSAN (77 aa). Low complexity-rich tracts occupy residues 160–181 and 189–200; these read TAAA…GAAG and DDSGIGDDSGAG.

The protein belongs to the bacterial ribosomal protein bL17 family. As to quaternary structure, part of the 50S ribosomal subunit. Contacts protein L32.

This Frankia casuarinae (strain DSM 45818 / CECT 9043 / HFP020203 / CcI3) protein is Large ribosomal subunit protein bL17.